The sequence spans 223 residues: Urease accessory protein UreF (223 aa).

Belongs to the UreF family. In terms of assembly, ureD, UreF and UreG form a complex that acts as a GTP-hydrolysis-dependent molecular chaperone, activating the urease apoprotein by helping to assemble the nickel containing metallocenter of UreC. The UreE protein probably delivers the nickel.

It localises to the cytoplasm. In terms of biological role, required for maturation of urease via the functional incorporation of the urease nickel metallocenter. The polypeptide is Urease accessory protein UreF (Pseudomonas paraeruginosa (strain DSM 24068 / PA7) (Pseudomonas aeruginosa (strain PA7))).